The chain runs to 132 residues: Small ribosomal subunit protein uS8 (132 aa).

It belongs to the universal ribosomal protein uS8 family. Part of the 30S ribosomal subunit. Contacts proteins S5 and S12.

Its function is as follows. One of the primary rRNA binding proteins, it binds directly to 16S rRNA central domain where it helps coordinate assembly of the platform of the 30S subunit. This chain is Small ribosomal subunit protein uS8, found in Agrobacterium fabrum (strain C58 / ATCC 33970) (Agrobacterium tumefaciens (strain C58)).